The primary structure comprises 909 residues: Protein translocase subunit SecA (909 aa).

ATP is bound by residues Gln87, 105 to 109 (GEGKT), and Asp507. The tract at residues 857 to 909 (DTHSELAEEQPPVAENRENKQQPFVRKNEKVGRNDPCPCGSGKKYKQCHGKLN) is disordered. The segment covering 871–889 (ENRENKQQPFVRKNEKVGR) has biased composition (basic and acidic residues). Zn(2+) contacts are provided by Cys893, Cys895, Cys904, and His905. The span at 899 to 909 (KKYKQCHGKLN) shows a compositional bias: basic residues.

The protein belongs to the SecA family. Monomer and homodimer. Part of the essential Sec protein translocation apparatus which comprises SecA, SecYEG and auxiliary proteins SecDF-YajC and YidC. Requires Zn(2+) as cofactor.

It localises to the cell inner membrane. The protein resides in the cytoplasm. The enzyme catalyses ATP + H2O + cellular proteinSide 1 = ADP + phosphate + cellular proteinSide 2.. Part of the Sec protein translocase complex. Interacts with the SecYEG preprotein conducting channel. Has a central role in coupling the hydrolysis of ATP to the transfer of proteins into and across the cell membrane, serving both as a receptor for the preprotein-SecB complex and as an ATP-driven molecular motor driving the stepwise translocation of polypeptide chains across the membrane. The polypeptide is Protein translocase subunit SecA (Nitrosomonas europaea (strain ATCC 19718 / CIP 103999 / KCTC 2705 / NBRC 14298)).